An 82-amino-acid chain; its full sequence is UPF0291 protein LVIS_1359 (82 aa).

The protein belongs to the UPF0291 family.

The protein resides in the cytoplasm. This chain is UPF0291 protein LVIS_1359, found in Levilactobacillus brevis (strain ATCC 367 / BCRC 12310 / CIP 105137 / JCM 1170 / LMG 11437 / NCIMB 947 / NCTC 947) (Lactobacillus brevis).